The sequence spans 117 residues: MADEEISKAFRDLQFKTNETRMRIVQGEQNKKVNYQKMRISESTKKNLVDLDENLKYYRSVGRMFLLTDKPAEISRHEAEAKQSKEKIEAIEKQKDYLEKGLVEAETNLRELIQSRR.

The protein belongs to the prefoldin subunit beta family. As to quaternary structure, heterohexamer of two PFD-alpha type and four PFD-beta type subunits. Expressed in the distal cell tip of developing embryos.

It is found in the cytoplasm. Functionally, binds specifically to cytosolic chaperonin (c-CPN) and transfers target proteins to it. Binds to nascent polypeptide chain and promotes folding in an environment in which there are many competing pathways for nonnative proteins. Has a role in gonadogenesis. The sequence is that of Probable prefoldin subunit 1 (pfd-1) from Caenorhabditis elegans.